The following is a 259-amino-acid chain: ATP synthase subunit b 3 (259 aa).

Residues 5–27 form a helical membrane-spanning segment; the sequence is WWTLGLQAINVLILIWILSRFLF.

This sequence belongs to the ATPase B chain family. As to quaternary structure, F-type ATPases have 2 components, F(1) - the catalytic core - and F(0) - the membrane proton channel. F(1) has five subunits: alpha(3), beta(3), gamma(1), delta(1), epsilon(1). F(0) has three main subunits: a(1), b(2) and c(10-14). The alpha and beta chains form an alternating ring which encloses part of the gamma chain. F(1) is attached to F(0) by a central stalk formed by the gamma and epsilon chains, while a peripheral stalk is formed by the delta and b chains.

It is found in the cell inner membrane. In terms of biological role, f(1)F(0) ATP synthase produces ATP from ADP in the presence of a proton or sodium gradient. F-type ATPases consist of two structural domains, F(1) containing the extramembraneous catalytic core and F(0) containing the membrane proton channel, linked together by a central stalk and a peripheral stalk. During catalysis, ATP synthesis in the catalytic domain of F(1) is coupled via a rotary mechanism of the central stalk subunits to proton translocation. Its function is as follows. Component of the F(0) channel, it forms part of the peripheral stalk, linking F(1) to F(0). This is ATP synthase subunit b 3 from Beijerinckia indica subsp. indica (strain ATCC 9039 / DSM 1715 / NCIMB 8712).